The following is a 348-amino-acid chain: Protein RecA (348 aa).

66 to 73 (GPESSGKT) serves as a coordination point for ATP.

Belongs to the RecA family.

The protein resides in the cytoplasm. Its function is as follows. Can catalyze the hydrolysis of ATP in the presence of single-stranded DNA, the ATP-dependent uptake of single-stranded DNA by duplex DNA, and the ATP-dependent hybridization of homologous single-stranded DNAs. It interacts with LexA causing its activation and leading to its autocatalytic cleavage. The chain is Protein RecA from Legionella pneumophila.